We begin with the raw amino-acid sequence, 334 residues long: Tryptophan--tRNA ligase (334 aa).

ATP is bound by residues glutamine 11–serine 13 and glycine 19–asparagine 20. Positions proline 12–asparagine 20 match the 'HIGH' region motif. L-tryptophan is bound at residue aspartate 135. ATP-binding positions include glycine 147 to aspartate 149, valine 186, and lysine 195 to serine 199. Positions lysine 195–serine 199 match the 'KMSKS' region motif.

This sequence belongs to the class-I aminoacyl-tRNA synthetase family. Homodimer.

It localises to the cytoplasm. The enzyme catalyses tRNA(Trp) + L-tryptophan + ATP = L-tryptophyl-tRNA(Trp) + AMP + diphosphate + H(+). Its function is as follows. Catalyzes the attachment of tryptophan to tRNA(Trp). This chain is Tryptophan--tRNA ligase, found in Salmonella typhi.